Consider the following 136-residue polypeptide: Mitochondrial pyruvate carrier 1-like protein (136 aa).

Residues 2-19 (ARMAVLWRKMRDNFQSKE) are Mitochondrial matrix-facing. Residues 20–42 (FREYVSSTHFWGPAFSWGLPLAA) form a helical membrane-spanning segment. The Mother cell cytoplasmic segment spans residues 43-51 (FKDMKASPE). A helical transmembrane segment spans residues 52-74 (IISGRMTTALILYSAIFMRFAYR). The Mitochondrial matrix portion of the chain corresponds to 75 to 136 (VQPRNLLLMA…PGSQPPKQAS (62 aa)). Residues 111–136 (EAKARDPPATAAAATSPGSQPPKQAS) are disordered. Residues 117–136 (PPATAAAATSPGSQPPKQAS) are compositionally biased toward low complexity.

It belongs to the mitochondrial pyruvate carrier (MPC) (TC 2.A.105) family.

The protein localises to the mitochondrion inner membrane. The enzyme catalyses pyruvate(out) + H(+)(out) = pyruvate(in) + H(+)(in). Functionally, mediates the uptake of pyruvate into mitochondria. In Homo sapiens (Human), this protein is Mitochondrial pyruvate carrier 1-like protein (MPC1L).